The following is a 79-amino-acid chain: DNA-directed RNA polymerase subunit omega (79 aa).

The protein belongs to the RNA polymerase subunit omega family. As to quaternary structure, the RNAP catalytic core consists of 2 alpha, 1 beta, 1 beta' and 1 omega subunit. When a sigma factor is associated with the core the holoenzyme is formed, which can initiate transcription.

It carries out the reaction RNA(n) + a ribonucleoside 5'-triphosphate = RNA(n+1) + diphosphate. Its function is as follows. Promotes RNA polymerase assembly. Latches the N- and C-terminal regions of the beta' subunit thereby facilitating its interaction with the beta and alpha subunits. The chain is DNA-directed RNA polymerase subunit omega from Thermotoga petrophila (strain ATCC BAA-488 / DSM 13995 / JCM 10881 / RKU-1).